We begin with the raw amino-acid sequence, 448 residues long: tRNA(Ile)-lysidine synthase (448 aa).

25–30 lines the ATP pocket; that stretch reads SGGSDS.

It belongs to the tRNA(Ile)-lysidine synthase family.

The protein resides in the cytoplasm. The enzyme catalyses cytidine(34) in tRNA(Ile2) + L-lysine + ATP = lysidine(34) in tRNA(Ile2) + AMP + diphosphate + H(+). Ligates lysine onto the cytidine present at position 34 of the AUA codon-specific tRNA(Ile) that contains the anticodon CAU, in an ATP-dependent manner. Cytidine is converted to lysidine, thus changing the amino acid specificity of the tRNA from methionine to isoleucine. This Brucella melitensis biotype 2 (strain ATCC 23457) protein is tRNA(Ile)-lysidine synthase.